The sequence spans 252 residues: Phosphatidylserine decarboxylase proenzyme (252 aa).

Catalysis depends on Ser211, which acts as the Schiff-base intermediate with substrate; via pyruvic acid. At Ser211 the chain carries Pyruvic acid (Ser); by autocatalysis.

This sequence belongs to the phosphatidylserine decarboxylase family. PSD-A subfamily. Heterodimer of a large membrane-associated beta subunit and a small pyruvoyl-containing alpha subunit. Pyruvate is required as a cofactor. Is synthesized initially as an inactive proenzyme. Formation of the active enzyme involves a self-maturation process in which the active site pyruvoyl group is generated from an internal serine residue via an autocatalytic post-translational modification. Two non-identical subunits are generated from the proenzyme in this reaction, and the pyruvate is formed at the N-terminus of the alpha chain, which is derived from the carboxyl end of the proenzyme. The post-translation cleavage follows an unusual pathway, termed non-hydrolytic serinolysis, in which the side chain hydroxyl group of the serine supplies its oxygen atom to form the C-terminus of the beta chain, while the remainder of the serine residue undergoes an oxidative deamination to produce ammonia and the pyruvoyl prosthetic group on the alpha chain.

Its subcellular location is the cell membrane. The enzyme catalyses a 1,2-diacyl-sn-glycero-3-phospho-L-serine + H(+) = a 1,2-diacyl-sn-glycero-3-phosphoethanolamine + CO2. Its pathway is phospholipid metabolism; phosphatidylethanolamine biosynthesis; phosphatidylethanolamine from CDP-diacylglycerol: step 2/2. Its function is as follows. Catalyzes the formation of phosphatidylethanolamine (PtdEtn) from phosphatidylserine (PtdSer). This Novosphingobium aromaticivorans (strain ATCC 700278 / DSM 12444 / CCUG 56034 / CIP 105152 / NBRC 16084 / F199) protein is Phosphatidylserine decarboxylase proenzyme.